A 269-amino-acid chain; its full sequence is Flagellar brake protein YcgR (269 aa).

Positions 1-42 (MLREPMNQHDAPGPAETGADSDAETDAETDAETDAGAADDRY) are disordered. Over residues 19–33 (ADSDAETDAETDAET) the composition is skewed to acidic residues. The region spanning 149-261 (QRRRHFRART…MENFLQRLVF (113 aa)) is the PilZ domain.

The protein belongs to the YcgR family. In terms of assembly, monomer. Interacts with the flagellar basal bodies.

The protein resides in the bacterial flagellum basal body. In terms of biological role, acts as a flagellar brake, regulating swimming and swarming in a bis-(3'-5') cyclic diguanylic acid (c-di-GMP)-dependent manner. Binds 1 c-di-GMP dimer per subunit. Increasing levels of c-di-GMP lead to decreased motility. This is Flagellar brake protein YcgR from Cupriavidus taiwanensis (strain DSM 17343 / BCRC 17206 / CCUG 44338 / CIP 107171 / LMG 19424 / R1) (Ralstonia taiwanensis (strain LMG 19424)).